Here is a 505-residue protein sequence, read N- to C-terminus: L-carnitine/gamma-butyrobetaine antiporter (505 aa).

Transmembrane regions (helical) follow at residues 10-30, 50-70, 92-112, 143-163, 195-215, 231-251, 263-283, 316-336, 347-367, 403-423, 446-466, and 475-495; these read IEPK…WLTV, IWGW…FWLV, IFMM…SIEI, GPLP…FFFV, FYLV…TPLV, LDAI…ACGL, SYLS…SFIM, WTVF…IFLA, LCFG…TVLG, FSTA…VTLI, LLVR…LLAL, and AIIA…LSFI.

The protein belongs to the BCCT transporter (TC 2.A.15) family. CaiT subfamily. In terms of assembly, homotrimer.

It is found in the cell inner membrane. It catalyses the reaction 4-(trimethylamino)butanoate(in) + (R)-carnitine(out) = 4-(trimethylamino)butanoate(out) + (R)-carnitine(in). It participates in amine and polyamine metabolism; carnitine metabolism. In terms of biological role, catalyzes the exchange of L-carnitine for gamma-butyrobetaine. This Citrobacter koseri (strain ATCC BAA-895 / CDC 4225-83 / SGSC4696) protein is L-carnitine/gamma-butyrobetaine antiporter.